Reading from the N-terminus, the 346-residue chain is Homeobox protein ceh-22 (346 aa).

2 disordered regions span residues 1-68 (MFNV…QSAL) and 135-190 (LPDQ…RKKR). Low complexity predominate over residues 9–24 (AATPSIASVSSVASPS). The segment covering 25 to 44 (EQHGLSTSVGVGVNDTTSRT) has biased composition (polar residues). Over residues 49–67 (AASSASSASAAPQQQSQSA) the composition is skewed to low complexity. Polar residues predominate over residues 147-156 (LDNSNTSNGN). Residues 166–182 (EDEDEILEDEENDEEDD) are compositionally biased toward acidic residues. Positions 189–248 (KRKRRVLFTKAQTYELERRFRSQKYLSAPEREALAMQIRLTPTQVKIWFQNHRYKTKKSH) form a DNA-binding region, homeobox.

The protein belongs to the NK-2 homeobox family.

It localises to the nucleus. In terms of biological role, involved in combinatorial activation of gene expression in pharyngeal muscle. Specifically binds a site necessary for activity of the B subelement of myo-2 enhancer. Its function is as follows. Regulates distal tip cell fate. This Caenorhabditis elegans protein is Homeobox protein ceh-22 (ceh-22).